The sequence spans 133 residues: Small ribosomal subunit protein uS11 (133 aa).

Positions Val114 to Val133 are disordered.

The protein belongs to the universal ribosomal protein uS11 family. As to quaternary structure, part of the 30S ribosomal subunit.

Located on the platform of the 30S subunit. This is Small ribosomal subunit protein uS11 from Archaeoglobus fulgidus (strain ATCC 49558 / DSM 4304 / JCM 9628 / NBRC 100126 / VC-16).